A 445-amino-acid chain; its full sequence is GTPase Der (445 aa).

EngA-type G domains lie at 2–166 (FRVA…PEYE) and 182–355 (IKVA…NQAW). Residues 8–15 (GIPNVGKS), 55–59 (DTGGY), 118–121 (NKID), 188–195 (GKPNAGKS), 235–239 (DTAGM), and 300–303 (NKID) each bind GTP. A KH-like domain is found at 356–440 (KRVGTGQLNR…PIKLIFRGKE (85 aa)).

This sequence belongs to the TRAFAC class TrmE-Era-EngA-EngB-Septin-like GTPase superfamily. EngA (Der) GTPase family. Associates with the 50S ribosomal subunit.

Functionally, GTPase that plays an essential role in the late steps of ribosome biogenesis. The sequence is that of GTPase Der from Sulfurihydrogenibium sp. (strain YO3AOP1).